A 464-amino-acid polypeptide reads, in one-letter code: tRNA modification GTPase MnmE (464 aa).

Residues R27, E89, and R128 each contribute to the (6S)-5-formyl-5,6,7,8-tetrahydrofolate site. A TrmE-type G domain is found at 225 to 384; sequence GLATAIIGHP…LEDRIAAMFF (160 aa). Position 235 (N235) interacts with K(+). GTP contacts are provided by residues 235 to 240, 254 to 260, and 279 to 282; these read NVGKSS, TDVAGTT, and DTAG. S239 contributes to the Mg(2+) binding site. Positions 254, 256, and 259 each coordinate K(+). Residue T260 participates in Mg(2+) binding. K464 contributes to the (6S)-5-formyl-5,6,7,8-tetrahydrofolate binding site.

The protein belongs to the TRAFAC class TrmE-Era-EngA-EngB-Septin-like GTPase superfamily. TrmE GTPase family. As to quaternary structure, homodimer. Heterotetramer of two MnmE and two MnmG subunits. The cofactor is K(+).

The protein localises to the cytoplasm. Its function is as follows. Exhibits a very high intrinsic GTPase hydrolysis rate. Involved in the addition of a carboxymethylaminomethyl (cmnm) group at the wobble position (U34) of certain tRNAs, forming tRNA-cmnm(5)s(2)U34. This is tRNA modification GTPase MnmE from Pediococcus pentosaceus (strain ATCC 25745 / CCUG 21536 / LMG 10740 / 183-1w).